Consider the following 393-residue polypeptide: Cysteine desulfurase (393 aa).

Residues 76 to 77 (GT), N155, Q183, and 203 to 205 (SAH) contribute to the pyridoxal 5'-phosphate site. K206 bears the N6-(pyridoxal phosphate)lysine mark. T241 is a pyridoxal 5'-phosphate binding site. The active-site Cysteine persulfide intermediate is C328. C328 provides a ligand contact to [2Fe-2S] cluster.

Belongs to the class-V pyridoxal-phosphate-dependent aminotransferase family. NifS/IscS subfamily. As to quaternary structure, homodimer. It depends on pyridoxal 5'-phosphate as a cofactor.

It carries out the reaction (sulfur carrier)-H + L-cysteine = (sulfur carrier)-SH + L-alanine. Its function is as follows. Catalyzes the removal of elemental sulfur atoms from cysteine to produce alanine. Seems to participate in the biosynthesis of the nitrogenase metalloclusters by providing the inorganic sulfur required for the Fe-S core formation. This is Cysteine desulfurase from Bradyrhizobium diazoefficiens (strain JCM 10833 / BCRC 13528 / IAM 13628 / NBRC 14792 / USDA 110).